The following is a 213-amino-acid chain: Inactive ribonuclease-like protein 10 (213 aa).

The first 24 residues, 1-24 (MKLTLVQFFFMMLLLLLGLGVGLG), serve as a signal peptide directing secretion. Asn128 is a glycosylation site (N-linked (GlcNAc...) asparagine).

It belongs to the pancreatic ribonuclease family. In terms of processing, the N-terminus is blocked. Glycosylated. In terms of tissue distribution, male-specific expression in proximal caput of the epididymis.

The protein resides in the secreted. Functionally, secreted proximal epididymal protein required for post-testicular sperm maturation and male fertility. May be involved in sperm adhesion to the egg zona pellucida. Does not have ribonuclease activity. This chain is Inactive ribonuclease-like protein 10 (RNASE10), found in Sus scrofa (Pig).